The chain runs to 448 residues: Acetate kinase (448 aa).

Asn7 contributes to the Mg(2+) binding site. Residue Lys14 coordinates ATP. Arg91 serves as a coordination point for substrate. Asp148 (proton donor/acceptor) is an active-site residue. Residues 208 to 212 (HIGNG) and 283 to 285 (DRR) contribute to the ATP site. Glu388 is a binding site for Mg(2+).

The protein belongs to the acetokinase family. In terms of assembly, homodimer. Requires Mg(2+) as cofactor. Mn(2+) is required as a cofactor.

It localises to the cytoplasm. It catalyses the reaction acetate + ATP = acetyl phosphate + ADP. Its pathway is metabolic intermediate biosynthesis; acetyl-CoA biosynthesis; acetyl-CoA from acetate: step 1/2. In terms of biological role, catalyzes the formation of acetyl phosphate from acetate and ATP. Can also catalyze the reverse reaction. The sequence is that of Acetate kinase from Treponema pallidum (strain Nichols).